Consider the following 119-residue polypeptide: Protein TusC (119 aa).

The protein belongs to the DsrF/TusC family. As to quaternary structure, heterohexamer, formed by a dimer of trimers. The hexameric TusBCD complex contains 2 copies each of TusB, TusC and TusD. The TusBCD complex interacts with TusE.

The protein resides in the cytoplasm. Its function is as follows. Part of a sulfur-relay system required for 2-thiolation of 5-methylaminomethyl-2-thiouridine (mnm(5)s(2)U) at tRNA wobble positions. The protein is Protein TusC of Photorhabdus laumondii subsp. laumondii (strain DSM 15139 / CIP 105565 / TT01) (Photorhabdus luminescens subsp. laumondii).